The chain runs to 1262 residues: Protein stoned-B (1262 aa).

Short sequence motifs (NPF) lie at residues 3-5, 19-21, 33-35, and 43-45; these read NPF. Residues 17–36 form a disordered region; the sequence is AANPFLMQSEPEPSSDNPFM. The disordered stretch occupies residues 49 to 189; that stretch reads ADDLELGAEP…DVSVDSGSSA (141 aa). Residues 50–60 show a composition bias toward acidic residues; sequence DDLELGAEPEA. The span at 101-111 shows a compositional bias: low complexity; it reads PPQSQPQLQSH. Pro residues predominate over residues 115–124; that stretch reads HPPPPRPLVP. Residues 128 to 145 show a composition bias toward polar residues; it reads TQDLISTVSSQLDETSSE. Residues 172 to 189 are compositionally biased toward low complexity; that stretch reads DSGLADLLDVSVDSGSSA. The NPF 5 signature appears at 210–212; that stretch reads NPF. Disordered regions lie at residues 225–452 and 474–507; these read VPLP…SPPT and EEMDTGLDFPLASSGQLSANPFASPDEEEPNFAP. Residues 233 to 272 show a composition bias toward pro residues; sequence KQPPRPPPPRPAPPRPAPPGQAAPQRPPPPLAAVNPPPAA. Over residues 325–345 the composition is skewed to acidic residues; it reads DLDETIGEGEPPEQEEPDTEQ. Over residues 384 to 401 the composition is skewed to polar residues; it reads QVNNMAAPSGTASTQRAT. The span at 417–429 shows a compositional bias: acidic residues; it reads DDEDEPEAMQEPE. The short motif at 493–495 is the NPF 6 element; that stretch reads NPF. Phosphoserine is present on residues S623 and S626. A disordered region spans residues 643-709; sequence SGVAPQLAPP…QDTPQTPLYD (67 aa). Positions 673–675 match the NPF 7 motif; that stretch reads NPF. In terms of domain architecture, SHD spans 728–902; that stretch reads GWEMQLRQPN…KIPALRERAL (175 aa). Residues 847 to 1108 form an interaction with Syt region; the sequence is KEFGSDLKKL…KGIERILGAV (262 aa). Positions 906–1219 constitute an MHD domain; the sequence is MEEVQVTAVD…ARHEYKVGIE (314 aa). The tract at residues 1226–1262 is disordered; sequence TNAYLAATRPIREEPPTTATKPTASPVAPSDSDTDSN. The span at 1241–1254 shows a compositional bias: low complexity; sequence PTTATKPTASPVAP.

It belongs to the Stoned B family. Interacts with the second C2 domain of Syt.

Its subcellular location is the cytoplasm. It localises to the synapse. Adapter protein involved in endocytic recycling of synaptic vesicles membranes. May act by mediating the retrieval of synaptotagmin protein Syt from the plasma membrane, thereby facilitating the internalization of multiple synaptic vesicles from the plasma membrane. The protein is Protein stoned-B (stnB) of Drosophila melanogaster (Fruit fly).